The primary structure comprises 490 residues: MDGGGETTATATMEGRGLKKGPWTTTEDAILTEYVRKHGEGNWNAVQKNSGLLRCGKSCRLRWANHLRPNLKKGSFTPDEEKIIIDLHAKLGNKWARMASQLPGRTDNEIKNYWNTRMKRRQRAGLPLYPHEIQHQGIDIDDEFEFDLTSFQFQNQDLDHNHQNMIQYTNSSNTSSSSSSFSSSSSQPSKRLRPDPLVSTNPGLNPIPDSSMDFQMFSLYNNSLENDNNQFGFSVPLSSSSSSNEVCNPNHILEYISENSDTRNTNKKDIDAMSYSSLLMGDLEIRSSSFPLGLDNSVLELPSNQRPTHSFSSSPIIDNGVHLEPPSGNSGLLDALLEESQALSRGGLFKDVRVSSSDLCEVQDKRVKMDFENLLIDHLNSSNHSSLGANPNIHNKYNEPTMVKVTVDDDDELLTSLLNNFPSTTTPLPDWYRVTEMQNEASYLAPPSGILMGNHQGNGRVEPPTVPPSSSVDPMASLGSCYWSNMPSIC.

The interval 1–21 (MDGGGETTATATMEGRGLKKG) is disordered. HTH myb-type domains follow at residues 15 to 67 (GRGL…ANHL) and 68 to 122 (RPNL…KRRQ). DNA-binding regions (H-T-H motif) lie at residues 43–67 (WNAV…ANHL) and 95–118 (WARM…NTRM). The segment at 168–206 (YTNSSNTSSSSSSFSSSSSQPSKRLRPDPLVSTNPGLNP) is disordered. Over residues 169-186 (TNSSNTSSSSSSFSSSSS) the composition is skewed to low complexity.

As to expression, present mostly in flowers, siliques and floral shoot tips. Expression is restricted to the subapical pith cells of both vegetative and flowering plants and to the hypocotyl hook. Expressed in pollen grains and pollen tube. Mostly expressed in mature pollen grains, and, to a lower extent, in inflorescences and siliques.

Its subcellular location is the nucleus. In terms of biological role, transcription activator. Binds to 5'-CAACTGTC-3' and/or 5'-TAACAAA-3' motif in target gene promoter (e.g. alpha-amylase) to promote their expression. Positive regulator of abscisic acid (ABA) responses leading to growth arrest during seed germination. Promotes the expression of aleurone-related genes (e.g. CP1, CP, GASA1, BXL1 and BXL2) in seeds. Together with MYB33 and MYB65, promotes the programmed cell death (PCD) leading to vacuolation of protein storage vacuoles (PSVs) in the aleurone layers during seed germination. Maybe involved in the regulation of leaves lamina morphogenesis. Involved in pollen grain development. Together with MYB97 and MYB120, functions as a male factor that controls pollen tube-synergid interaction in fertilization. Required for pollen tube growth arrest and sperm cell release in the female gametophyte, probably via the regulation of pollen tube-specific gene expression. The chain is Transcription factor MYB101 from Arabidopsis thaliana (Mouse-ear cress).